We begin with the raw amino-acid sequence, 96 residues long: Co-chaperonin GroES (96 aa).

It belongs to the GroES chaperonin family. In terms of assembly, heptamer of 7 subunits arranged in a ring. Interacts with the chaperonin GroEL.

It localises to the cytoplasm. Its function is as follows. Together with the chaperonin GroEL, plays an essential role in assisting protein folding. The GroEL-GroES system forms a nano-cage that allows encapsulation of the non-native substrate proteins and provides a physical environment optimized to promote and accelerate protein folding. GroES binds to the apical surface of the GroEL ring, thereby capping the opening of the GroEL channel. The chain is Co-chaperonin GroES from Methylobacterium radiotolerans (strain ATCC 27329 / DSM 1819 / JCM 2831 / NBRC 15690 / NCIMB 10815 / 0-1).